A 210-amino-acid polypeptide reads, in one-letter code: MIDPTETYMNTLVPMVVEQTSRGERAYDIFSRLLKERIIFLNGPVHDGMSSLIVAQLLHLEAENPSKEISMYINSPGGVVTSGLSIYDTMQYIKPKVSTLVIGQAASMGSLLLTAGEAGMRFSLPNSRVMVHQPSGGYQGQATDIMIHAEETLKLKRRLNEIYVKHTGQDYDTIEKALERDNFMSPEQAKEFGLIDEIVENRSKADDAES.

Residue Ser107 is the Nucleophile of the active site. The active site involves His132.

Belongs to the peptidase S14 family. Fourteen ClpP subunits assemble into 2 heptameric rings which stack back to back to give a disk-like structure with a central cavity, resembling the structure of eukaryotic proteasomes.

It is found in the cytoplasm. The catalysed reaction is Hydrolysis of proteins to small peptides in the presence of ATP and magnesium. alpha-casein is the usual test substrate. In the absence of ATP, only oligopeptides shorter than five residues are hydrolyzed (such as succinyl-Leu-Tyr-|-NHMec, and Leu-Tyr-Leu-|-Tyr-Trp, in which cleavage of the -Tyr-|-Leu- and -Tyr-|-Trp bonds also occurs).. Functionally, cleaves peptides in various proteins in a process that requires ATP hydrolysis. Has a chymotrypsin-like activity. Plays a major role in the degradation of misfolded proteins. This Ruegeria sp. (strain TM1040) (Silicibacter sp.) protein is ATP-dependent Clp protease proteolytic subunit.